Here is a 121-residue protein sequence, read N- to C-terminus: Large ribosomal subunit protein bL12 (121 aa).

Belongs to the bacterial ribosomal protein bL12 family. Homodimer. Part of the ribosomal stalk of the 50S ribosomal subunit. Forms a multimeric L10(L12)X complex, where L10 forms an elongated spine to which 2 to 4 L12 dimers bind in a sequential fashion. Binds GTP-bound translation factors.

Forms part of the ribosomal stalk which helps the ribosome interact with GTP-bound translation factors. Is thus essential for accurate translation. The sequence is that of Large ribosomal subunit protein bL12 from Shewanella halifaxensis (strain HAW-EB4).